Consider the following 345-residue polypeptide: Anthranilate phosphoribosyltransferase (345 aa).

5-phospho-alpha-D-ribose 1-diphosphate is bound by residues G80, 83 to 84 (GD), T88, 90 to 93 (NIST), 108 to 116 (KHGNRSVSS), and S120. An anthranilate-binding site is contributed by G80. Residue S92 participates in Mg(2+) binding. Position 111 (N111) interacts with anthranilate. Anthranilate is bound at residue R166. D225 and E226 together coordinate Mg(2+).

This sequence belongs to the anthranilate phosphoribosyltransferase family. As to quaternary structure, homodimer. Mg(2+) serves as cofactor.

The enzyme catalyses N-(5-phospho-beta-D-ribosyl)anthranilate + diphosphate = 5-phospho-alpha-D-ribose 1-diphosphate + anthranilate. The protein operates within amino-acid biosynthesis; L-tryptophan biosynthesis; L-tryptophan from chorismate: step 2/5. Its function is as follows. Catalyzes the transfer of the phosphoribosyl group of 5-phosphorylribose-1-pyrophosphate (PRPP) to anthranilate to yield N-(5'-phosphoribosyl)-anthranilate (PRA). This chain is Anthranilate phosphoribosyltransferase, found in Pelotomaculum thermopropionicum (strain DSM 13744 / JCM 10971 / SI).